We begin with the raw amino-acid sequence, 122 residues long: MQNRIEILNATLSDDQLRLACQTEGNEAERKPSGQMLVDSDHFAFVYILELADSFEYVIIKEHVWPELKQAHAQKIPVVLEAGDQTIELAGLHEELEYLLENIKDNANYGEEMEEKVKRVFL.

Belongs to the UPF0738 family.

The polypeptide is UPF0738 protein YjbL (yjbL) (Bacillus subtilis (strain 168)).